Here is a 149-residue protein sequence, read N- to C-terminus: UPF0336 protein Lxx02810 (149 aa).

The protein belongs to the UPF0336 family.

This chain is UPF0336 protein Lxx02810, found in Leifsonia xyli subsp. xyli (strain CTCB07).